A 486-amino-acid polypeptide reads, in one-letter code: Transcription enhancer factor-like protein egl-44 (486 aa).

Residues 47–57 (GTTTPTTTSGG) show a composition bias toward low complexity. Residues 47 to 87 (GTTTPTTTSGGQMMTLSPPAGDGPGSAGSMAPESTSSLSDL) are disordered. Residues 88 to 164 (SGDAEGVWSI…QVLARKKLRD (77 aa)) constitute a DNA-binding region (TEA). Residues 165–188 (EQAKKKGDIPSLLQQASPPGGVKS) are disordered.

As to quaternary structure, interacts (via N-terminus) with egl-46 (via C-terminus); the interaction is direct; the interaction may regulate transcription. Interacts with yap-1 (via WW domain); the interaction may regulate transcription. As to expression, expressed in HSN neurons in embryos and in the FLP neurons from the L1 stage through to adults. Not expressed in touch cells. Also expressed in larval hypodermis, intestine, pharyngeal muscle and other neurons. In adults expression is lost from some neurons, is weaker in the hypodermis but remains in the intestine. Expressed in HOB neuron, ray neurons RnA and RnB, and the ray structural cell, Rnst; rays are male-specific genital sensilla (simple sense organs).

It is found in the nucleus. Its function is as follows. Transcription factor. Binds to DNA sequence motif 5'-CATNNNNAAATGCAT-3' as a heterodimer with egl-46. Represses expression of genes involved in differentiation of touch receptor neurons (TRN), probably acting as a heterodimer with egl-46, perhaps by occupying similar cis-regulatory elements as an unc-86/mec-3 heterodimer. Plays a role in cell fate specification of neurons, including the hook neuron HOB, and touch receptor neurons. Involved in male mating behavior, acting in concert with egl-46, via modulation of expression of polycystins lov-1 and pkd-2, homeodomain protein ceh-26, and neuropeptide-like protein nlp-8. Acts upstream of egl-46 to prevent touch cell differentiation in FLP neurons. Plays a role in neuron differentiation by repressing the expression of zag-1 in FLP neurons, probably acting as a heterodimer with egl-46; because zag-1 represses expression of egl-46 and egl-44, together these proteins form a bistable, negative-feedback loop that regulates the choice between neuronal fates. Also promotes HSN neuron development. In association with egl-46, regulates cell cycle exit in the neuronal Q cell lineage. Plays a role in specifying commissural dendrites of the PVD nociceptive neurons, acting in concert with egl-46. May be involved in thermal stress response downstream of yap-1. The protein is Transcription enhancer factor-like protein egl-44 (egl-44) of Caenorhabditis elegans.